Reading from the N-terminus, the 283-residue chain is Aquaporin PIP2-5 (283 aa).

Transmembrane regions (helical) follow at residues 37–57 and 74–94; these read AVIA…ATVI and CGGV…FILV. Residues 106 to 108 carry the NPA 1 motif; the sequence is NPA. 3 helical membrane-spanning segments follow: residues 125–145, 167–187, and 199–219; these read ILYI…VKGF, GTGL…VFSA, and VPVL…LATI. The NPA 2 motif lies at 227–229; that stretch reads NPA. The helical transmembrane segment at 249-269 threads the bilayer; that stretch reads IFWVGPFIGAAIAALYHQIVL.

Belongs to the MIP/aquaporin (TC 1.A.8) family. PIP (TC 1.A.8.11) subfamily. As to expression, expressed in roots.

The protein resides in the cell membrane. Its function is as follows. Water channel required to facilitate the transport of water across cell membrane. May play a role in root water uptake. This is Aquaporin PIP2-5 (PIP2-5) from Oryza sativa subsp. japonica (Rice).